Consider the following 376-residue polypeptide: Chaperone protein DnaJ (376 aa).

The J domain occupies 4 to 69 (DFYETLGVQK…QKRAAYDRFG (66 aa)). The CR-type zinc finger occupies 133–211 (GKTAQIRVPA…CAGQGRVTEE (79 aa)). Positions 146, 149, 163, 166, 185, 188, 199, and 202 each coordinate Zn(2+). CXXCXGXG motif repeat units follow at residues 146-153 (CTECSGSG), 163-170 (CSMCHGHG), 185-192 (CPQCQGRG), and 199-206 (CPKCAGQG).

The protein belongs to the DnaJ family. As to quaternary structure, homodimer. Requires Zn(2+) as cofactor.

It is found in the cytoplasm. In terms of biological role, participates actively in the response to hyperosmotic and heat shock by preventing the aggregation of stress-denatured proteins and by disaggregating proteins, also in an autonomous, DnaK-independent fashion. Unfolded proteins bind initially to DnaJ; upon interaction with the DnaJ-bound protein, DnaK hydrolyzes its bound ATP, resulting in the formation of a stable complex. GrpE releases ADP from DnaK; ATP binding to DnaK triggers the release of the substrate protein, thus completing the reaction cycle. Several rounds of ATP-dependent interactions between DnaJ, DnaK and GrpE are required for fully efficient folding. Also involved, together with DnaK and GrpE, in the DNA replication of plasmids through activation of initiation proteins. In Mesorhizobium japonicum (strain LMG 29417 / CECT 9101 / MAFF 303099) (Mesorhizobium loti (strain MAFF 303099)), this protein is Chaperone protein DnaJ.